We begin with the raw amino-acid sequence, 397 residues long: Growth-regulating factor 1 (397 aa).

The QLQ domain maps to 18–53 (PFTASQWQELEHQALIYKYMASGTPIPSDLILPLRR). 2 short sequence motifs (bipartite nuclear localization signal) span residues 86-105 (RKAE…KKWR) and 123-130 (RGKNRSRK). Positions 90 to 134 (DPEPGRCRRTDGKKWRCSKEAYPDSKYCEKHMHRGKNRSRKPVEM) constitute a WRC domain. Residues 117-176 (CEKHMHRGKNRSRKPVEMSLATPPPPSSSATSAASNTSAGVAPTTTTTSSPAPSYSRPAP) form a disordered region. A compositionally biased stretch (basic residues) spans 120–129 (HMHRGKNRSR). Low complexity predominate over residues 144–174 (SSATSAASNTSAGVAPTTTTTSSPAPSYSRP).

This sequence belongs to the GRF family.

The protein resides in the nucleus. Transcription activator that plays a regulatory role in gibberellin-induced stem elongation. The sequence is that of Growth-regulating factor 1 (GRF1) from Oryza sativa subsp. japonica (Rice).